A 130-amino-acid polypeptide reads, in one-letter code: MSTLVSLPGATPAAAPDYQSLERPLNFTESAAAKVKSLIQEEGNPDLALRVYIEGGGCSGFQYGFEFDENRAEDDLAVQTSGVTLLVDPLSLQYLMGAEVDYTESLTGAQFVIRNPNAKTTCGCGSSFSM.

Cys-58, Cys-122, and Cys-124 together coordinate iron-sulfur cluster.

The protein belongs to the HesB/IscA family. As to quaternary structure, homodimer. Iron-sulfur cluster serves as cofactor.

Required for insertion of 4Fe-4S clusters for at least IspG. The protein is Iron-sulfur cluster insertion protein ErpA of Stenotrophomonas maltophilia (strain K279a).